The following is a 1479-amino-acid chain: Chromosome partition protein MukB (1479 aa).

Position 34–41 (34–41) interacts with ATP; that stretch reads GGNGAGKS. Coiled-coil stretches lie at residues 337 to 418, 511 to 603, 780 to 810, 847 to 1116, and 1206 to 1265; these read LNLV…QYQQ, QAER…RAPV, RAAREMRLESLRDEREALAEQYATLSFDVQK, ELDR…AKAG, and DDPV…LQAV. The flexible hinge stretch occupies residues 666 to 783; sequence PGGSEDPRLN…EVPLFGRAAR (118 aa).

The protein belongs to the SMC family. MukB subfamily. As to quaternary structure, homodimerization via its hinge domain. Binds to DNA via its C-terminal region. Interacts, and probably forms a ternary complex, with MukE and MukF via its C-terminal region. The complex formation is stimulated by calcium or magnesium. Interacts with tubulin-related protein FtsZ.

It localises to the cytoplasm. The protein resides in the nucleoid. In terms of biological role, plays a central role in chromosome condensation, segregation and cell cycle progression. Functions as a homodimer, which is essential for chromosome partition. Involved in negative DNA supercoiling in vivo, and by this means organize and compact chromosomes. May achieve or facilitate chromosome segregation by condensation DNA from both sides of a centrally located replisome during cell division. The protein is Chromosome partition protein MukB of Pectobacterium carotovorum subsp. carotovorum (strain PC1).